A 141-amino-acid polypeptide reads, in one-letter code: Nucleoside triphosphatase NudI (141 aa).

The region spanning 1 to 141 (MRQRTIVCPL…RKTLRLKGLL (141 aa)) is the Nudix hydrolase domain. The Nudix box signature appears at 38 to 59 (GGVEPGERIEEALRREIREELG).

Belongs to the Nudix hydrolase family. NudI subfamily. Monomer. The cofactor is Mg(2+).

The catalysed reaction is a ribonucleoside 5'-triphosphate + H2O = a ribonucleoside 5'-phosphate + diphosphate + H(+). The enzyme catalyses a 2'-deoxyribonucleoside 5'-triphosphate + H2O = a 2'-deoxyribonucleoside 5'-phosphate + diphosphate + H(+). It carries out the reaction dUTP + H2O = dUMP + diphosphate + H(+). It catalyses the reaction dTTP + H2O = dTMP + diphosphate + H(+). The catalysed reaction is dCTP + H2O = dCMP + diphosphate + H(+). In terms of biological role, catalyzes the hydrolysis of nucleoside triphosphates, with a preference for pyrimidine deoxynucleoside triphosphates (dUTP, dTTP and dCTP). The chain is Nucleoside triphosphatase NudI from Escherichia coli (strain ATCC 8739 / DSM 1576 / NBRC 3972 / NCIMB 8545 / WDCM 00012 / Crooks).